A 461-amino-acid polypeptide reads, in one-letter code: UPF0210 protein Ddes_0622 (461 aa).

Belongs to the UPF0210 family. Homodimer.

The protein is UPF0210 protein Ddes_0622 of Desulfovibrio desulfuricans (strain ATCC 27774 / DSM 6949 / MB).